Here is a 337-residue protein sequence, read N- to C-terminus: Large ribosomal subunit protein uL3 (337 aa).

Positions 1 to 29 (MPKINRPRRGSLAFSPRKRAQSPIPKYKS) are disordered.

The protein belongs to the universal ribosomal protein uL3 family. Part of the 50S ribosomal subunit. Forms a cluster with proteins L14 and L24e.

One of the primary rRNA binding proteins, it binds directly near the 3'-end of the 23S rRNA, where it nucleates assembly of the 50S subunit. The protein is Large ribosomal subunit protein uL3 of Methanoregula boonei (strain DSM 21154 / JCM 14090 / 6A8).